A 402-amino-acid polypeptide reads, in one-letter code: GTPase HflX (402 aa).

The Hflx-type G domain occupies 181–350 (DTVGLIGYTN…MIIEHLNLSI (170 aa)). GTP contacts are provided by residues 187-194 (GYTNAGKT), 212-216 (FTTLT), 233-236 (DTVG), 300-303 (NKVD), and 328-330 (SAK). Positions 194 and 214 each coordinate Mg(2+).

It belongs to the TRAFAC class OBG-HflX-like GTPase superfamily. HflX GTPase family. In terms of assembly, monomer. Associates with the 50S ribosomal subunit. Mg(2+) is required as a cofactor.

Its subcellular location is the cytoplasm. Functionally, GTPase that associates with the 50S ribosomal subunit and may have a role during protein synthesis or ribosome biogenesis. The polypeptide is GTPase HflX (Methanocaldococcus jannaschii (strain ATCC 43067 / DSM 2661 / JAL-1 / JCM 10045 / NBRC 100440) (Methanococcus jannaschii)).